The sequence spans 508 residues: T-complex protein 1 subunit beta (508 aa).

This sequence belongs to the TCP-1 chaperonin family. In terms of assembly, component of the T-complex protein 1 (TCP1) complex.

The protein resides in the cytoplasm. Functionally, molecular chaperone; assists the folding of proteins upon ATP hydrolysis. The polypeptide is T-complex protein 1 subunit beta (CCT2) (Encephalitozoon cuniculi (strain GB-M1) (Microsporidian parasite)).